Consider the following 606-residue polypeptide: Maternal effect protein oskar (606 aa).

The 70-residue stretch at 152-221 (EYPDIDSEVR…SGKRIFNLKA (70 aa)) folds into the HTH OST-type domain. A phosphoserine mark is found at serine 270 and serine 275. The segment at 425-439 (LMGDDFMLYLARMEL) is leucine-zipper.

As to quaternary structure, interacts with smaug (smg). Interacts with yl/yolkless. Begins to accumulate at the posterior pole of the oocyte from stage 8 onwards.

The protein localises to the endosome. In terms of biological role, organizes the germ plasm and directs localization of the posterior determinant nanos. Oskar protein is required to keep nanos (nos) RNA and staufen protein at the posterior pole. This is Maternal effect protein oskar (osk) from Drosophila melanogaster (Fruit fly).